The primary structure comprises 2890 residues: Bifunctional DNA-directed RNA polymerase subunit beta-beta' (2890 aa).

A DNA-directed RNA polymerase subunit beta region spans residues 1-1377 (MSKKIPLKNR…DINIFGDEMD (1377 aa)). The interval 1384–2890 (PIVIKEDDRP…LRTIEDSPKI (1507 aa)) is DNA-directed RNA polymerase subunit beta'. Zn(2+)-binding residues include C1449, C1451, C1465, and C1468. Mg(2+)-binding residues include D1849, D1851, and D1853. C2179, C2253, C2260, and C2263 together coordinate Zn(2+).

This sequence in the N-terminal section; belongs to the RNA polymerase beta chain family. In the C-terminal section; belongs to the RNA polymerase beta' chain family. As to quaternary structure, the RNAP catalytic core consists of 2 alpha, 1 beta/beta' and 1 omega subunit. When a sigma factor is associated with the core the holoenzyme is formed, which can initiate transcription. Requires Mg(2+) as cofactor. It depends on Zn(2+) as a cofactor.

The enzyme catalyses RNA(n) + a ribonucleoside 5'-triphosphate = RNA(n+1) + diphosphate. In terms of biological role, DNA-dependent RNA polymerase catalyzes the transcription of DNA into RNA using the four ribonucleoside triphosphates as substrates. The chain is Bifunctional DNA-directed RNA polymerase subunit beta-beta' (rpoBC) from Helicobacter acinonychis (strain Sheeba).